A 476-amino-acid chain; its full sequence is Cysteine--tRNA ligase (476 aa).

Residue Cys-31 participates in Zn(2+) binding. The 'HIGH' region motif lies at 33–43; sequence PTVYNYAHIGN. The Zn(2+) site is built by Cys-211, His-236, and Glu-240. Positions 269-273 match the 'KMSKS' region motif; it reads KMSKS. Lys-272 is an ATP binding site.

The protein belongs to the class-I aminoacyl-tRNA synthetase family. As to quaternary structure, monomer. Zn(2+) is required as a cofactor.

The protein resides in the cytoplasm. The catalysed reaction is tRNA(Cys) + L-cysteine + ATP = L-cysteinyl-tRNA(Cys) + AMP + diphosphate. In Xanthomonas axonopodis pv. citri (strain 306), this protein is Cysteine--tRNA ligase.